Here is a 511-residue protein sequence, read N- to C-terminus: Pickpocket protein 19 (511 aa).

A run of 2 helical transmembrane segments spans residues 59-79 (LWLA…TVLM) and 471-491 (GIIS…LFVL).

The protein belongs to the amiloride-sensitive sodium channel (TC 1.A.6) family. As to expression, expressed in the tracheal system. Expressed in the taste-sensing terminal organ of the larval head. In adults, expressed in hairs on the tibia, femur and wing margin, but not in hairs on the tarsi of the leg.

It localises to the membrane. Part of a complex that plays a role in tracheal liquid clearance. In both larvae and adults, contributes to the behavioral response to salt. Probable role in sodium transport. This chain is Pickpocket protein 19 (ppk19), found in Drosophila melanogaster (Fruit fly).